The chain runs to 247 residues: Chymase (247 aa).

An N-terminal signal peptide occupies residues 1–19 (MLLLPLPLLLLFLCSRAEA). Positions 20–21 (GE) are cleaved as a propeptide — activation peptide. The region spanning 22–245 (IIGGTECKPH…YRPWINKILQ (224 aa)) is the Peptidase S1 domain. The cysteines at positions 51 and 67 are disulfide-linked. The active-site Charge relay system is the histidine 66. N-linked (GlcNAc...) asparagine glycans are attached at residues asparagine 80 and asparagine 103. Catalysis depends on aspartate 110, which acts as the Charge relay system. Disulfide bonds link cysteine 144/cysteine 209 and cysteine 175/cysteine 188. Serine 203 serves as the catalytic Charge relay system.

It belongs to the peptidase S1 family. Granzyme subfamily.

It is found in the secreted. The protein resides in the cytoplasmic granule. It carries out the reaction Preferential cleavage: Phe-|-Xaa &gt; Tyr-|-Xaa &gt; Trp-|-Xaa &gt; Leu-|-Xaa.. Its function is as follows. Major secreted protease of mast cells with suspected roles in vasoactive peptide generation, extracellular matrix degradation, and regulation of gland secretion. The protein is Chymase (CMA1) of Papio hamadryas (Hamadryas baboon).